The following is a 139-amino-acid chain: Maximins 4/H3 type 6 (139 aa).

An N-terminal signal peptide occupies residues 1–18 (MNFKYIVAVSFLIASAYA). The propeptide occupies 19–43 (RSVQNDEQSLSQRDVLEEESLREIR). Position 70 is an asparagine amide (Asn-70). A propeptide spanning residues 74–118 (TAEDHEVMKRLEAVMRDLDSLDHPEEASERETRGFNQDEIAKEKR) is cleaved from the precursor. Isoleucine amide is present on Ile-138.

This sequence belongs to the bombinin family. Expressed by the skin glands.

It localises to the secreted. In terms of biological role, maximin-4 shows antibacterial activity against both Gram-positive and Gram-negative bacteria. It also shows antimicrobial activity against the fungus C.albicans, but not against A.flavus nor P.uticale. It has little hemolytic activity. It does not possess a significant cytotoxicity against tumor cell lines. It does not possess a significant anti-HIV activity. Functionally, maximin-H3 shows antibacterial activity against both Gram-positive and Gram-negative bacteria. It also shows antimicrobial activity against the fungus C.albicans. Shows strong hemolytic activity. This chain is Maximins 4/H3 type 6, found in Bombina maxima (Giant fire-bellied toad).